The sequence spans 401 residues: MRTLWQHCHVATMAEGRYSAIEDAAIVTSAGLIEWIGPRAELAPVEADRTVDLGGAWVTPGLIDCHTHAVFGGNRSGEFEQRLQGVSYAEIAAQGGGIASTVRATRAASEDELFASARQRVQALMRDGVTTIEIKSGYGLDLANERKMLRVARRLADELPLAVRATCLAAHALPPEYAGRADDYIAHICDEMLPALAAEGLVDAVDAFCEHLAFSPAQVERLFIKARALGLPVKLHAEQLSSLHGSSLAARYQALSADHLEFMTEEDAIAMAKAGTVAVLLPGAFYFLRETQLPPMDALRRHGVKIALASDLNPGTSPGLSLRLMLNMGCTCFRMTPEEALAGVTVHAATALGLGDSHGSLEVGKVADFVAWQIERPADLAYWLGGDLPKRVVRKGHEISN.

Residues histidine 66 and histidine 68 each coordinate Fe(3+). Zn(2+)-binding residues include histidine 66 and histidine 68. The 4-imidazolone-5-propanoate site is built by arginine 75, tyrosine 138, and histidine 171. An N-formimidoyl-L-glutamate-binding site is contributed by tyrosine 138. Histidine 236 lines the Fe(3+) pocket. A Zn(2+)-binding site is contributed by histidine 236. Glutamine 239 contributes to the 4-imidazolone-5-propanoate binding site. Residue aspartate 311 coordinates Fe(3+). Aspartate 311 lines the Zn(2+) pocket. N-formimidoyl-L-glutamate contacts are provided by asparagine 313 and glycine 315. Residue threonine 316 coordinates 4-imidazolone-5-propanoate.

It belongs to the metallo-dependent hydrolases superfamily. HutI family. Zn(2+) is required as a cofactor. The cofactor is Fe(3+).

The protein localises to the cytoplasm. The catalysed reaction is 4-imidazolone-5-propanoate + H2O = N-formimidoyl-L-glutamate. It functions in the pathway amino-acid degradation; L-histidine degradation into L-glutamate; N-formimidoyl-L-glutamate from L-histidine: step 3/3. Its function is as follows. Catalyzes the hydrolytic cleavage of the carbon-nitrogen bond in imidazolone-5-propanoate to yield N-formimidoyl-L-glutamate. It is the third step in the universal histidine degradation pathway. The protein is Imidazolonepropionase of Pseudomonas putida (strain GB-1).